We begin with the raw amino-acid sequence, 565 residues long: Deoxyribodipyrimidine photo-lyase, mitochondrial (565 aa).

The Photolyase/cryptochrome alpha/beta domain occupies 75–226; the sequence is STVMHWFRND…QLKYYHDSCI (152 aa). Residues Y326 and 338–342 each bind FAD; that span reads TSGLS. 2 interaction with DNA regions span residues 384–391 and 451–452; these read EVAWRDFY and NR. Residue 482-484 coordinates FAD; the sequence is DGD. Q514 contributes to the DNA binding site.

Belongs to the DNA photolyase class-1 family. Monomer. The cofactor is FAD. (6R)-5,10-methylene-5,6,7,8-tetrahydrofolate serves as cofactor.

The protein resides in the nucleus. It is found in the mitochondrion. It catalyses the reaction cyclobutadipyrimidine (in DNA) = 2 pyrimidine residues (in DNA).. Involved in repair of UV radiation-induced DNA damage. Catalyzes the light-dependent monomerization (300-600 nm) of cyclobutyl pyrimidine dimers (in cis-syn configuration), which are formed between adjacent bases on the same DNA strand upon exposure to ultraviolet radiation. The polypeptide is Deoxyribodipyrimidine photo-lyase, mitochondrial (PHR1) (Saccharomyces cerevisiae (strain ATCC 204508 / S288c) (Baker's yeast)).